Here is a 243-residue protein sequence, read N- to C-terminus: Adenosine 5'-phosphosulfate reductase (243 aa).

The [4Fe-4S] cluster site is built by C126, C127, C209, and C212. The Nucleophile; cysteine thiosulfonate intermediate role is filled by C235.

It belongs to the PAPS reductase family. CysH subfamily. [4Fe-4S] cluster serves as cofactor.

The protein resides in the cytoplasm. It catalyses the reaction [thioredoxin]-disulfide + sulfite + AMP + 2 H(+) = adenosine 5'-phosphosulfate + [thioredoxin]-dithiol. It functions in the pathway sulfur metabolism; hydrogen sulfide biosynthesis; sulfite from sulfate. In terms of biological role, catalyzes the formation of sulfite from adenosine 5'-phosphosulfate (APS) using thioredoxin as an electron donor. In Staphylococcus epidermidis (strain ATCC 12228 / FDA PCI 1200), this protein is Adenosine 5'-phosphosulfate reductase.